A 511-amino-acid polypeptide reads, in one-letter code: Maturase K (511 aa).

It belongs to the intron maturase 2 family. MatK subfamily.

The protein localises to the plastid. It localises to the chloroplast. In terms of biological role, usually encoded in the trnK tRNA gene intron. Probably assists in splicing its own and other chloroplast group II introns. The protein is Maturase K of Brachypodium distachyon (Purple false brome).